Here is a 606-residue protein sequence, read N- to C-terminus: Medium-chain acyl-CoA ligase ACSF2, mitochondrial (606 aa).

A mitochondrion-targeting transit peptide spans 1–13 (MSSKILLTNLRTS). ATP-binding positions include 256-264 (TSGTTGKPK), D484, R499, and K590.

It belongs to the ATP-dependent AMP-binding enzyme family.

It is found in the mitochondrion. It carries out the reaction a medium-chain fatty acid + ATP + CoA = a medium-chain fatty acyl-CoA + AMP + diphosphate. The enzyme catalyses octanoate + ATP + CoA = octanoyl-CoA + AMP + diphosphate. Acyl-CoA synthases catalyze the initial reaction in fatty acid metabolism, by forming a thioester with CoA. Has some preference toward medium-chain substrates. Plays a role in adipocyte differentiation. The sequence is that of Medium-chain acyl-CoA ligase ACSF2, mitochondrial from Danio rerio (Zebrafish).